Here is a 447-residue protein sequence, read N- to C-terminus: Glucose-6-phosphate isomerase (447 aa).

The Proton donor role is filled by glutamate 289. Active-site residues include histidine 310 and lysine 424.

Belongs to the GPI family.

It is found in the cytoplasm. It carries out the reaction alpha-D-glucose 6-phosphate = beta-D-fructose 6-phosphate. The protein operates within carbohydrate biosynthesis; gluconeogenesis. It functions in the pathway carbohydrate degradation; glycolysis; D-glyceraldehyde 3-phosphate and glycerone phosphate from D-glucose: step 2/4. Its function is as follows. Catalyzes the reversible isomerization of glucose-6-phosphate to fructose-6-phosphate. The polypeptide is Glucose-6-phosphate isomerase (Parabacteroides distasonis (strain ATCC 8503 / DSM 20701 / CIP 104284 / JCM 5825 / NCTC 11152)).